Here is a 476-residue protein sequence, read N- to C-terminus: ATP synthase subunit beta, chloroplastic (476 aa).

An ATP-binding site is contributed by Gly-156–Thr-163.

The protein belongs to the ATPase alpha/beta chains family. F-type ATPases have 2 components, CF(1) - the catalytic core - and CF(0) - the membrane proton channel. CF(1) has five subunits: alpha(3), beta(3), gamma(1), delta(1), epsilon(1). CF(0) has four main subunits: a(1), b(1), b'(1) and c(9-12).

It localises to the plastid. Its subcellular location is the chloroplast thylakoid membrane. The catalysed reaction is ATP + H2O + 4 H(+)(in) = ADP + phosphate + 5 H(+)(out). Produces ATP from ADP in the presence of a proton gradient across the membrane. The catalytic sites are hosted primarily by the beta subunits. This is ATP synthase subunit beta, chloroplastic from Fucus vesiculosus (Bladder wrack).